We begin with the raw amino-acid sequence, 123 residues long: uncharacterized protein (123 aa).

Residues 1-24 (MGGGGPPARVQGTEGSQTGGGAVA) are disordered.

This is an uncharacterized protein from Halorubrum pleomorphic virus 1 (HRPV-1).